A 726-amino-acid chain; its full sequence is Prolyl endopeptidase-like (726 aa).

Serine 138 carries the phosphoserine modification. Catalysis depends on charge relay system residues serine 558, aspartate 644, and histidine 689.

This sequence belongs to the peptidase S9A family. In terms of assembly, homodimer. Interacts with the AP-1 complex.

It is found in the cytoplasm. The protein localises to the cytosol. It localises to the golgi apparatus. The protein resides in the trans-Golgi network. Its subcellular location is the cytoskeleton. It is found in the nucleus. Functionally, serine peptidase whose precise substrate specificity remains unclear. Does not cleave peptides after a arginine or lysine residue. Regulates trans-Golgi network morphology and sorting by regulating the membrane binding of the AP-1 complex. May play a role in the regulation of synaptic vesicle exocytosis. In Rattus norvegicus (Rat), this protein is Prolyl endopeptidase-like (Prepl).